We begin with the raw amino-acid sequence, 605 residues long: Ankyrin repeat domain-containing protein 13D (605 aa).

ANK repeat units follow at residues 39-68 and 72-101; these read RGRT…NVGK and QGWA…YQRA. Residues 306-333 are disordered; sequence AQQHSSHTGAPVQQAASPTNPTAISPEE. The segment covering 319-328 has biased composition (polar residues); that stretch reads QAASPTNPTA. UIM domains lie at 482-501 and 528-547; these read EDDD…AGTE and EEQL…STEP. The interval 541-605 is disordered; the sequence is LQLSTEPRGP…RILQLSLTEH (65 aa). The segment covering 550–563 has biased composition (pro residues); the sequence is PGSPPRTPPAPGPP. S552 bears the Phosphoserine mark. T556 bears the Phosphothreonine mark. Residues 564 to 575 show a composition bias toward low complexity; it reads SFEEQLRLALEL. 2 consecutive UIM domains span residues 564–583 and 589–605; these read SFEE…QEER and QEEE…LTEH. A compositionally biased stretch (basic and acidic residues) spans 576–589; it reads SSREQEERERRGQQ.

In terms of assembly, interacts with EGFR (ubiquitinated); the interaction is direct and may regulate EGFR internalization.

It is found in the cell membrane. The protein resides in the late endosome. In terms of biological role, ubiquitin-binding protein that specifically recognizes and binds 'Lys-63'-linked ubiquitin. Does not bind 'Lys-48'-linked ubiquitin. Positively regulates the internalization of ligand-activated EGFR by binding to the Ub moiety of ubiquitinated EGFR at the cell membrane. In Homo sapiens (Human), this protein is Ankyrin repeat domain-containing protein 13D (ANKRD13D).